A 508-amino-acid chain; its full sequence is Pancreatic alpha-amylase 2a5 (508 aa).

An N-terminal signal peptide occupies residues 1 to 15 (MKFVLLLSLIGFCWA). A Pyrrolidone carboxylic acid modification is found at Gln-16. Disulfide bonds link Cys-43/Cys-101, Cys-85/Cys-130, and Cys-156/Cys-172. Residues Asn-115, Arg-170, and Asp-179 each coordinate Ca(2+). Residue Arg-207 participates in chloride binding. Asp-209 (nucleophile) is an active-site residue. Residue His-213 participates in Ca(2+) binding. Glu-245 (proton donor) is an active-site residue. Residues Asn-310 and Arg-349 each coordinate chloride. Disulfide bonds link Cys-390–Cys-396 and Cys-462–Cys-474.

It belongs to the glycosyl hydrolase 13 family. In terms of assembly, monomer. The cofactor is Ca(2+). Chloride is required as a cofactor.

It is found in the secreted. Its subcellular location is the extracellular space. It carries out the reaction Endohydrolysis of (1-&gt;4)-alpha-D-glucosidic linkages in polysaccharides containing three or more (1-&gt;4)-alpha-linked D-glucose units.. The chain is Pancreatic alpha-amylase 2a5 from Mus musculus (Mouse).